The chain runs to 199 residues: Large ribosomal subunit protein uL4 (199 aa).

It belongs to the universal ribosomal protein uL4 family. As to quaternary structure, part of the 50S ribosomal subunit.

Its function is as follows. One of the primary rRNA binding proteins, this protein initially binds near the 5'-end of the 23S rRNA. It is important during the early stages of 50S assembly. It makes multiple contacts with different domains of the 23S rRNA in the assembled 50S subunit and ribosome. In terms of biological role, forms part of the polypeptide exit tunnel. In Aquifex aeolicus (strain VF5), this protein is Large ribosomal subunit protein uL4.